The following is a 142-amino-acid chain: 2-aminomuconate deaminase (142 aa).

The protein belongs to the 2-aminomuconate deaminase family. In terms of assembly, homotetramer.

It catalyses the reaction (2Z,4E)-2-aminomuconate + H2O = (3E)-2-oxohex-3-enedioate + NH4(+). With respect to regulation, slightly inhibited by Pb(2+), Hg(+) and Cu(2+). Involved in the modified meta-cleavage pathway for the 2-aminophenol catabolism. Only active toward 2-aminomuconic acid. This Pseudomonas sp protein is 2-aminomuconate deaminase (amnD).